The primary structure comprises 420 residues: UDP-N-acetylglucosamine 1-carboxyvinyltransferase (420 aa).

Phosphoenolpyruvate is bound at residue 22–23; that stretch reads KN. Arginine 92 is a UDP-N-acetyl-alpha-D-glucosamine binding site. The active-site Proton donor is cysteine 116. Position 116 is a 2-(S-cysteinyl)pyruvic acid O-phosphothioketal (cysteine 116). Residues 121 to 125, 161 to 164, aspartate 306, and isoleucine 328 each bind UDP-N-acetyl-alpha-D-glucosamine; these read RPVDL and KVSV.

It belongs to the EPSP synthase family. MurA subfamily.

It localises to the cytoplasm. It carries out the reaction phosphoenolpyruvate + UDP-N-acetyl-alpha-D-glucosamine = UDP-N-acetyl-3-O-(1-carboxyvinyl)-alpha-D-glucosamine + phosphate. Its pathway is cell wall biogenesis; peptidoglycan biosynthesis. Cell wall formation. Adds enolpyruvyl to UDP-N-acetylglucosamine. This is UDP-N-acetylglucosamine 1-carboxyvinyltransferase from Yersinia pseudotuberculosis serotype O:1b (strain IP 31758).